Reading from the N-terminus, the 220-residue chain is Ribose-5-phosphate isomerase A (220 aa).

Substrate contacts are provided by residues 28–31, 81–84, and 94–97; these read TGST, DGAD, and KGGG. The active-site Proton acceptor is the E103. Residue K121 participates in substrate binding.

This sequence belongs to the ribose 5-phosphate isomerase family. As to quaternary structure, homodimer.

The enzyme catalyses aldehydo-D-ribose 5-phosphate = D-ribulose 5-phosphate. It participates in carbohydrate degradation; pentose phosphate pathway; D-ribose 5-phosphate from D-ribulose 5-phosphate (non-oxidative stage): step 1/1. In terms of biological role, catalyzes the reversible conversion of ribose-5-phosphate to ribulose 5-phosphate. This Shewanella sp. (strain W3-18-1) protein is Ribose-5-phosphate isomerase A.